The primary structure comprises 382 residues: Ribosomal RNA large subunit methyltransferase G (382 aa).

Belongs to the methyltransferase superfamily. RlmG family.

It localises to the cytoplasm. It catalyses the reaction guanosine(1835) in 23S rRNA + S-adenosyl-L-methionine = N(2)-methylguanosine(1835) in 23S rRNA + S-adenosyl-L-homocysteine + H(+). Its function is as follows. Specifically methylates the guanine in position 1835 (m2G1835) of 23S rRNA. In Aliivibrio fischeri (strain ATCC 700601 / ES114) (Vibrio fischeri), this protein is Ribosomal RNA large subunit methyltransferase G.